The primary structure comprises 380 residues: Cyclohex-1-ene-1-carbonyl-CoA dehydrogenase (380 aa).

Catalysis depends on Asp91, which acts as the Proton acceptor. Residues Leu122, Ala124, Thr125, Ser131, and Thr157 each coordinate FAD. Ser131 serves as a coordination point for cyclohex-1-ene-1-carbonyl-CoA. Ser131 is a binding site for cyclohexa-1,5-diene-1-carbonyl-CoA. 3 residues coordinate cyclohex-1-ene-1-carbonyl-CoA: Lys178, Arg242, and Thr363. Cyclohexa-1,5-diene-1-carbonyl-CoA is bound by residues Lys178, Arg242, and Thr363. FAD is bound by residues Thr365 and Gln367. Position 375 (Arg375) interacts with cyclohex-1-ene-1-carbonyl-CoA. Arg375 lines the cyclohexa-1,5-diene-1-carbonyl-CoA pocket.

Belongs to the acyl-CoA dehydrogenase family. In terms of assembly, homotetramer. The cofactor is FAD.

It catalyses the reaction cyclohex-1-ene-1-carbonyl-CoA + oxidized [electron-transfer flavoprotein] + H(+) = cyclohexa-1,5-diene-1-carbonyl-CoA + reduced [electron-transfer flavoprotein]. In terms of biological role, acyl-CoA dehydrogenase involved in the anaerobic degradation of cyclohexane carboxylic acid (CHC). Catalyzes the 1,4-dehydrogenation at C3 and C6 of cyclohex-1-ene-1-carbonyl-CoA (CHeneCoA or Ch1CoA) to cyclohexa-1,5-diene-1-carbonyl-CoA (CHdieneCoA or Ch1,5CoA). Also able to catalyze, at a lower rate, the dehydrogenation at C3 and C4 of CHdieneCoA to benzoyl-CoA. This chain is Cyclohex-1-ene-1-carbonyl-CoA dehydrogenase, found in Geobacter metallireducens (strain ATCC 53774 / DSM 7210 / GS-15).